We begin with the raw amino-acid sequence, 184 residues long: dITP/XTP pyrophosphatase (184 aa).

7 to 12 (TSNPGK) serves as a coordination point for substrate. The Mg(2+) site is built by Glu36 and Asp65. The active-site Proton acceptor is the Asp65. Residues Ser66, 139 to 142 (FGFD), Lys162, and 167 to 168 (HR) contribute to the substrate site.

Belongs to the HAM1 NTPase family. Homodimer. Mg(2+) serves as cofactor.

It carries out the reaction XTP + H2O = XMP + diphosphate + H(+). The enzyme catalyses dITP + H2O = dIMP + diphosphate + H(+). The catalysed reaction is ITP + H2O = IMP + diphosphate + H(+). Its function is as follows. Pyrophosphatase that catalyzes the hydrolysis of nucleoside triphosphates to their monophosphate derivatives, with a high preference for the non-canonical purine nucleotides XTP (xanthosine triphosphate), dITP (deoxyinosine triphosphate) and ITP. Seems to function as a house-cleaning enzyme that removes non-canonical purine nucleotides from the nucleotide pool, thus preventing their incorporation into DNA/RNA and avoiding chromosomal lesions. This chain is dITP/XTP pyrophosphatase, found in Thermococcus kodakarensis (strain ATCC BAA-918 / JCM 12380 / KOD1) (Pyrococcus kodakaraensis (strain KOD1)).